A 2073-amino-acid polypeptide reads, in one-letter code: Histone acetyltransferase KAT6B (2073 aa).

Residues 1-77 (MVKLANPLYT…LASYKDPDNP (77 aa)) form the SAMD1-like winged helix (WH) domain. Residues 72–97 (KDPDNPGRFSSVKPGTFPKSAKGSRG) are disordered. Positions 103-176 (RNVDWNKLLR…KDGPQYRVNY (74 aa)) constitute an H15 domain. 2 consecutive PHD-type zinc fingers follow at residues 213–272 (IPIC…CKTC) and 269–320 (CKTC…CRPK). Ser-355 carries the phosphoserine modification. 4 disordered regions span residues 360 to 409 (EGSM…RPGA), 442 to 531 (FTPS…VPSL), 553 to 583 (TQGQ…TAKS), and 639 to 663 (VTPQ…PDQD). The interval 361–717 (GSMNAFTGRG…ECESGVEDCG (357 aa)) is negatively regulates HAT activity. The segment covering 379–399 (KVCTTPSSGHAASGKDSSSRL) has biased composition (polar residues). A compositionally biased stretch (basic and acidic residues) spans 447–460 (DGRRSRGEIIDFSK). Positions 470–485 (QKQSCTSHVLATGTTQ) are enriched in polar residues. A compositionally biased stretch (pro residues) spans 488–499 (KPPPSSLPPPTP). Over residues 501 to 531 (SGQSPSSQKSSTATSSPSPQSSSSQCSVPSL) the composition is skewed to low complexity. At Ser-647 the chain carries Phosphoserine. Residue Lys-673 forms a Glycyl lysine isopeptide (Lys-Gly) (interchain with G-Cter in SUMO2) linkage. The region spanning 715 to 989 (DCGRYPSVIE…LDPDSLRWTP (275 aa)) is the MYST-type HAT domain. Positions 718–1008 (RYPSVIEFGK…EEEREAEKEA (291 aa)) are catalytic. Residues 748–773 (LYLCEFCLKYMKSKNILLRHSKKCGW) form a C2HC MYST-type zinc finger. An interaction with BRPF1 region spans residues 752-1008 (EFCLKYMKSK…EEEREAEKEA (257 aa)). Lys-815 bears the N6-acetyllysine; by autocatalysis mark. Residues 856-860 (SCIMI) and 865-871 (QRQGFGR) each bind acetyl-CoA. Catalysis depends on Glu-891, which acts as the Proton donor/acceptor. Ser-895 contributes to the acetyl-CoA binding site. Disordered regions lie at residues 1022 to 1452 (EQEI…FKEV), 1484 to 1538 (SCNS…MEID), and 1580 to 1619 (QSPQ…SPSV). Residues 1025–1043 (ILSTRANSRQSPAKVQSKN) show a composition bias toward polar residues. N6-acetyllysine is present on residues Lys-1038, Lys-1042, and Lys-1044. Ser-1048 carries the phosphoserine modification. The span at 1069–1105 (SEEEEEEEDEEEEEEEEEEEEDEEEEEEEEEEEEEEN) shows a compositional bias: acidic residues. The span at 1106–1117 (IQSSPPRLTKPQ) shows a compositional bias: polar residues. Basic residues predominate over residues 1121 to 1140 (IKRKRPFVLKKKRGRKRRRI). Positions 1142–1155 (SSVTTETISETTEV) are enriched in low complexity. A compositionally biased stretch (basic residues) spans 1187-1200 (PVLRKAFQHQPGKK). 3 stretches are compositionally biased toward basic and acidic residues: residues 1229–1243 (SNLK…EPLK), 1306–1315 (RIEEEVKETG), and 1341–1350 (EKPEDDLIKP). Residues 1351 to 1374 (EEEEEEEEEEEEEEEEEEGEEEEG) show a composition bias toward acidic residues. Composition is skewed to basic and acidic residues over residues 1378–1390 (VEKD…SQEK) and 1396–1407 (STEKEDSARLDD). The segment covering 1408 to 1417 (HEEEEEEDEE) has biased composition (acidic residues). A compositionally biased stretch (basic and acidic residues) spans 1433-1452 (HMESAEVEKEELPRESFKEV). A compositionally biased stretch (acidic residues) spans 1498 to 1507 (AVPESDEEPP). Basic and acidic residues predominate over residues 1513–1529 (QKQDQKNSKEVDTEFKE). Residues 1560–2073 (QDCAETQEAC…QSLNGSYMRR (514 aa)) form an interaction with RUNX1 and RUNX2 region. A compositionally biased stretch (polar residues) spans 1580–1591 (QSPQIATTLDDC). A compositionally biased stretch (low complexity) spans 1594 to 1611 (SDHSSPVSSVHSHPGQSV).

It belongs to the MYST (SAS/MOZ) family. Component of the MOZ/MORF complex composed at least of ING5, KAT6A, KAT6B, MEAF6 and one of BRPF1, BRD1/BRPF2 and BRPF3. Interacts with RUNX1 and RUNX2. In terms of processing, autoacetylated. Autoacetylation at Lys-815 is required for proper function. In terms of tissue distribution, ubiquitously expressed, with high levels in heart, pancreas, testis and ovary.

Its subcellular location is the nucleus. It carries out the reaction L-lysyl-[protein] + acetyl-CoA = N(6)-acetyl-L-lysyl-[protein] + CoA + H(+). In terms of biological role, histone acetyltransferase which may be involved in both positive and negative regulation of transcription. Required for RUNX2-dependent transcriptional activation. May be involved in cerebral cortex development. Component of the MOZ/MORF complex which has a histone H3 acetyltransferase activity. This Homo sapiens (Human) protein is Histone acetyltransferase KAT6B (KAT6B).